The sequence spans 980 residues: Valine--tRNA ligase (980 aa).

A 'HIGH' region motif is present at residues 43 to 53 (PNVTGTLHMGH). The 'KMSKS' region signature appears at 586-590 (KMSKS). ATP is bound at residue lysine 589. Positions 914-980 (LVDMDAERMR…AGLREQRGKL (67 aa)) form a coiled coil.

This sequence belongs to the class-I aminoacyl-tRNA synthetase family. ValS type 1 subfamily. In terms of assembly, monomer.

The protein localises to the cytoplasm. It catalyses the reaction tRNA(Val) + L-valine + ATP = L-valyl-tRNA(Val) + AMP + diphosphate. Functionally, catalyzes the attachment of valine to tRNA(Val). As ValRS can inadvertently accommodate and process structurally similar amino acids such as threonine, to avoid such errors, it has a 'posttransfer' editing activity that hydrolyzes mischarged Thr-tRNA(Val) in a tRNA-dependent manner. The sequence is that of Valine--tRNA ligase from Xanthomonas oryzae pv. oryzae (strain PXO99A).